We begin with the raw amino-acid sequence, 609 residues long: Glutamine--fructose-6-phosphate aminotransferase [isomerizing] (609 aa).

Residue C2 is the Nucleophile; for GATase activity of the active site. One can recognise a Glutamine amidotransferase type-2 domain in the interval 2–219 (CGIFGYLGSK…SGELAIVGLG (218 aa)). 2 SIS domains span residues 280–426 (ISEK…SKHT) and 458–599 (WAHT…IDCP). The active-site For Fru-6P isomerization activity is the K604.

Homodimer.

It localises to the cytoplasm. The catalysed reaction is D-fructose 6-phosphate + L-glutamine = D-glucosamine 6-phosphate + L-glutamate. Its function is as follows. Catalyzes the first step in hexosamine metabolism, converting fructose-6P into glucosamine-6P using glutamine as a nitrogen source. This is Glutamine--fructose-6-phosphate aminotransferase [isomerizing] from Chlamydia abortus (strain DSM 27085 / S26/3) (Chlamydophila abortus).